A 263-amino-acid polypeptide reads, in one-letter code: Insertion sequence IS21-like putative ATP-binding protein (263 aa).

114-121 (GPSGTGKT) serves as a coordination point for ATP.

The protein belongs to the IS21/IS1162 putative ATP-binding protein family.

The polypeptide is Insertion sequence IS21-like putative ATP-binding protein (tnpB) (Bacteroides fragilis).